The sequence spans 160 residues: Lymphocyte antigen 96 (160 aa).

Residues 1–16 (MLPFILFSTLLPLIFT) form the signal peptide. Disulfide bonds link Cys-25-Cys-51, Cys-37-Cys-148, and Cys-95-Cys-105. Asn-26, Asn-77, and Asn-101 each carry an N-linked (GlcNAc...) asparagine glycan. Residues 119 to 123 (FSFKG) form an interaction with lipopolysaccharide region. A glycan (N-linked (GlcNAc...) asparagine) is linked at Asn-150.

Heterogeneous homomer formed from homodimers; disulfide-linked. Belongs to the lipopolysaccharide (LPS) receptor, a multi-protein complex containing at least CD14, LY96 and TLR4. Binds to the extracellular domains of TLR2 and TLR4. Ligand binding induces interaction with TLR4 and oligomerization of the complex. Post-translationally, N-glycosylated.

The protein localises to the secreted. The protein resides in the extracellular space. Functionally, binds bacterial lipopolysaccharide (LPS). Cooperates with TLR4 in the innate immune response to bacterial lipopolysaccharide (LPS), and with TLR2 in the response to cell wall components from Gram-positive and Gram-negative bacteria. Enhances TLR4-dependent activation of NF-kappa-B. Cells expressing both LY96 and TLR4, but not TLR4 alone, respond to LPS. The polypeptide is Lymphocyte antigen 96 (LY96) (Cricetulus griseus (Chinese hamster)).